A 150-amino-acid polypeptide reads, in one-letter code: MYHHYHAFQGRKLTDQERARVLEFQDSIHYSPRYSDDNYEYRHVMLPKAMLKVIPSDYFNSEVGTLRILTEDEWRGLGITQSLGWEHYECHAPEPHILLFKRPLNYEAELRAATAAAQQQQQQQQQQQQQQQQHQTQSISNDMQVPPQIS.

The segment covering 115–137 (AAAQQQQQQQQQQQQQQQQHQTQ) has biased composition (low complexity). Positions 115–150 (AAAQQQQQQQQQQQQQQQQHQTQSISNDMQVPPQIS) are disordered.

It belongs to the CKS family. In terms of assembly, forms a stable but non-covalent complex with the CDC28 protein and with a cyclin.

Binds to the catalytic subunit of the cyclin dependent kinase (CDC28) and is essential for its biological function. The protein is Cyclin-dependent kinases regulatory subunit of Saccharomyces cerevisiae (strain ATCC 204508 / S288c) (Baker's yeast).